The sequence spans 293 residues: Homoserine kinase (293 aa).

84-94 (PISRGLGSSSA) contacts ATP.

This sequence belongs to the GHMP kinase family. Homoserine kinase subfamily.

The protein localises to the cytoplasm. It carries out the reaction L-homoserine + ATP = O-phospho-L-homoserine + ADP + H(+). It functions in the pathway amino-acid biosynthesis; L-threonine biosynthesis; L-threonine from L-aspartate: step 4/5. Its function is as follows. Catalyzes the ATP-dependent phosphorylation of L-homoserine to L-homoserine phosphate. The chain is Homoserine kinase from Wolinella succinogenes (strain ATCC 29543 / DSM 1740 / CCUG 13145 / JCM 31913 / LMG 7466 / NCTC 11488 / FDC 602W) (Vibrio succinogenes).